The chain runs to 189 residues: GTPase NRas (189 aa).

10-17 (GAGGVGKS) provides a ligand contact to GTP. An Effector region motif is present at residues 32–40 (YDPTIEDSY). GTP-binding positions include 57–61 (DTAGQ) and 116–119 (NKCD). A hypervariable region region spans residues 166-185 (YRMKKLNSNEDGNQGCMGLS). C181 is lipidated: S-palmitoyl cysteine. The S-farnesyl cysteine moiety is linked to residue C186. A propeptide spans 187-189 (IVM) (removed in mature form).

Belongs to the small GTPase superfamily. Ras family. Palmitoylated by the ZDHHC9-GOLGA7 complex. Depalmitoylated by ABHD17A, ABHD17B and ABHD17C. A continuous cycle of de- and re-palmitoylation regulates rapid exchange between plasma membrane and Golgi.

The protein resides in the cell membrane. Its subcellular location is the golgi apparatus membrane. The catalysed reaction is GTP + H2O = GDP + phosphate + H(+). With respect to regulation, alternates between an inactive form bound to GDP and an active form bound to GTP. Activated by a guanine nucleotide-exchange factor (GEF) and inactivated by a GTPase-activating protein (GAP). In terms of biological role, ras proteins bind GDP/GTP and possess intrinsic GTPase activity. The sequence is that of GTPase NRas (NRAS) from Gallus gallus (Chicken).